The primary structure comprises 358 residues: Methionine import ATP-binding protein MetN (358 aa).

The ABC transporter domain occupies 14–255; it reads VVFDAVSKRF…SRHETTRALL (242 aa). 52–59 lines the ATP pocket; it reads GRSGAGKS.

Belongs to the ABC transporter superfamily. Methionine importer (TC 3.A.1.24) family. The complex is composed of two ATP-binding proteins (MetN), two transmembrane proteins (MetI) and a solute-binding protein (MetQ).

Its subcellular location is the cell inner membrane. The enzyme catalyses L-methionine(out) + ATP + H2O = L-methionine(in) + ADP + phosphate + H(+). It carries out the reaction D-methionine(out) + ATP + H2O = D-methionine(in) + ADP + phosphate + H(+). Functionally, part of the ABC transporter complex MetNIQ involved in methionine import. Responsible for energy coupling to the transport system. The sequence is that of Methionine import ATP-binding protein MetN from Rhizobium meliloti (strain 1021) (Ensifer meliloti).